The primary structure comprises 445 residues: Phosphoglucosamine mutase (445 aa).

The active-site Phosphoserine intermediate is the Ser-102. Residues Ser-102, Asp-241, Asp-243, and Asp-245 each coordinate Mg(2+). Phosphoserine is present on Ser-102.

Belongs to the phosphohexose mutase family. The cofactor is Mg(2+). In terms of processing, activated by phosphorylation.

The enzyme catalyses alpha-D-glucosamine 1-phosphate = D-glucosamine 6-phosphate. Functionally, catalyzes the conversion of glucosamine-6-phosphate to glucosamine-1-phosphate. This chain is Phosphoglucosamine mutase, found in Salmonella choleraesuis (strain SC-B67).